Consider the following 372-residue polypeptide: Alanine dehydrogenase 2 (372 aa).

Residue H95 is part of the active site. 169-199 provides a ligand contact to NAD(+); that stretch reads KVTIIGGGQAGTNAAKIALGLGADVTILDVN.

Belongs to the AlaDH/PNT family.

It carries out the reaction L-alanine + NAD(+) + H2O = pyruvate + NH4(+) + NADH + H(+). It functions in the pathway amino-acid degradation; L-alanine degradation via dehydrogenase pathway; NH(3) and pyruvate from L-alanine: step 1/1. Its function is as follows. May play a role in cell wall synthesis as L-alanine is an important constituent of the peptidoglycan layer. The chain is Alanine dehydrogenase 2 (ald2) from Staphylococcus aureus (strain Mu50 / ATCC 700699).